We begin with the raw amino-acid sequence, 349 residues long: Adenine deaminase (349 aa).

Zn(2+) is bound by residues histidine 24, histidine 26, and histidine 204. Glutamate 207 serves as the catalytic Proton donor. Aspartate 285 serves as a coordination point for Zn(2+). Aspartate 286 lines the substrate pocket.

Belongs to the metallo-dependent hydrolases superfamily. Adenosine and AMP deaminases family. Adenine deaminase type 2 subfamily. Zn(2+) serves as cofactor.

The catalysed reaction is adenine + H2O + H(+) = hypoxanthine + NH4(+). Catalyzes the hydrolytic deamination of adenine to hypoxanthine. Plays an important role in the purine salvage pathway and in nitrogen catabolism. In Trichlorobacter lovleyi (strain ATCC BAA-1151 / DSM 17278 / SZ) (Geobacter lovleyi), this protein is Adenine deaminase.